Here is a 406-residue protein sequence, read N- to C-terminus: Zinc finger protein CONSTANS-LIKE 6 (406 aa).

Positions 17, 20, 40, and 45 each coordinate Zn(2+). The B box-type; atypical zinc-finger motif lies at 17–59 (CDSCVKRRARWYCAADDAFLCHACDGSVHSANPLARRHERVRL). The disordered stretch occupies residues 63 to 95 (SAGKYRHASPPHQATWHQGFTRKARTPRGGKKS). Over residues 82-95 (FTRKARTPRGGKKS) the composition is skewed to basic residues. Positions 357–399 (REARVSRYREKRRTRLFSKKIRYEVRKLNAEKRPRMKGRFVKR) constitute a CCT domain.

The protein belongs to the CONSTANS family.

The protein resides in the nucleus. This chain is Zinc finger protein CONSTANS-LIKE 6 (COL6), found in Arabidopsis thaliana (Mouse-ear cress).